Consider the following 278-residue polypeptide: Bifunctional protein FolD (278 aa).

Residues 165–167 and Ser-190 each bind NADP(+); that span reads GRS.

The protein belongs to the tetrahydrofolate dehydrogenase/cyclohydrolase family. In terms of assembly, homodimer.

The enzyme catalyses (6R)-5,10-methylene-5,6,7,8-tetrahydrofolate + NADP(+) = (6R)-5,10-methenyltetrahydrofolate + NADPH. The catalysed reaction is (6R)-5,10-methenyltetrahydrofolate + H2O = (6R)-10-formyltetrahydrofolate + H(+). It participates in one-carbon metabolism; tetrahydrofolate interconversion. Catalyzes the oxidation of 5,10-methylenetetrahydrofolate to 5,10-methenyltetrahydrofolate and then the hydrolysis of 5,10-methenyltetrahydrofolate to 10-formyltetrahydrofolate. This chain is Bifunctional protein FolD, found in Clostridium tetani (strain Massachusetts / E88).